Here is a 284-residue protein sequence, read N- to C-terminus: MYGSCLLEKEAGMYPGTLMSPGGDGTAGTGGTGGGGSPMPASNFAAAPAFSHYMGYPHMPSMDPHWPSLGVWGSPYSPPREDWSVYPGPSSTMGTVPVNDVTSSPAAFCSTDYSNLGPVGGGTSGSSLPGQAGGSLVPTDAGAAKASSPSRSRHSPYAWMRKTVQVTGKTRTKEKYRVVYTDHQRLELEKEFHCNRYITIQRKSELAVNLGLSERQVKIWFQNRRAKERKMIKKKISQFENSGGSVQSDSDSISPGELPNTFFTTPSAVRGFQPIEIQQVIVSE.

Disordered regions lie at residues 15–40 (PGTLMSPGGDGTAGTGGTGGGGSPMP) and 120–155 (GGGTSGSSLPGQAGGSLVPTDAGAAKASSPSRSRHS). Residues 22–37 (GGDGTAGTGGTGGGGS) are compositionally biased toward gly residues. A DNA-binding region (homeobox) is located at residues 173–232 (KEKYRVVYTDHQRLELEKEFHCNRYITIQRKSELAVNLGLSERQVKIWFQNRRAKERKMI). A compositionally biased stretch (polar residues) spans 238-253 (QFENSGGSVQSDSDSI). Residues 238 to 259 (QFENSGGSVQSDSDSISPGELP) form a disordered region.

This sequence belongs to the Caudal homeobox family.

The protein localises to the nucleus. This Homo sapiens (Human) protein is Homeobox protein CDX-4 (CDX4).